A 388-amino-acid chain; its full sequence is Pectin acetylesterase 1 (388 aa).

The first 24 residues, Met1 to Gly24, serve as a signal peptide directing secretion. N-linked (GlcNAc...) asparagine glycosylation is found at Asn30 and Asn33. Residues Ser187 and Asp283 each act as charge relay system in the active site. Asn304 is a glycosylation site (N-linked (GlcNAc...) asparagine). The active-site Charge relay system is His349.

Belongs to the pectinacetylesterase family.

It localises to the secreted. Its subcellular location is the cell wall. Functionally, hydrolyzes acetyl esters in homogalacturonan regions of pectin. In type I primary cell wall, galacturonic acid residues of pectin can be acetylated at the O-2 and O-3 positions. Decreasing the degree of acetylation of pectin gels in vitro alters their physical properties. The polypeptide is Pectin acetylesterase 1 (Arabidopsis thaliana (Mouse-ear cress)).